Here is a 131-residue protein sequence, read N- to C-terminus: Translation initiation factor 5A (131 aa).

The residue at position 37 (lysine 37) is a Hypusine.

The protein belongs to the eIF-5A family.

The protein resides in the cytoplasm. Its function is as follows. Functions by promoting the formation of the first peptide bond. In Methanococcus vannielii (strain ATCC 35089 / DSM 1224 / JCM 13029 / OCM 148 / SB), this protein is Translation initiation factor 5A (eIF5A).